We begin with the raw amino-acid sequence, 312 residues long: MTAWRVVFMGTPDFATGTLQALLDGPDTVVAVFTQPDKPVGRGMKMQKTPVKQLAEQHGIPVYQPNRLREAEAVTALRALRPDVVVVVAYGQILSREVLEIPTHGCINVHASLLPRWRGAAPIQRAILAGDAQSGVTIMAMEEGLDTGPMYSTVVQSIDNHTTGGQLHDQLMAAGGGLLVETLARIKHEGLTPQIQPEQGVTYAAKLKKEEGLVDWSQPAIQIQRAVQAFDPWPCAFTLWQGKPLKLFAASVVVGHGTPGEVIEVEKDGFVVACGDGALRVAQVQAAGKKRMSSGEWLRGHGVKQGERLGEG.

Residue 112 to 115 coordinates (6S)-5,6,7,8-tetrahydrofolate; it reads SLLP.

It belongs to the Fmt family.

The catalysed reaction is L-methionyl-tRNA(fMet) + (6R)-10-formyltetrahydrofolate = N-formyl-L-methionyl-tRNA(fMet) + (6S)-5,6,7,8-tetrahydrofolate + H(+). Attaches a formyl group to the free amino group of methionyl-tRNA(fMet). The formyl group appears to play a dual role in the initiator identity of N-formylmethionyl-tRNA by promoting its recognition by IF2 and preventing the misappropriation of this tRNA by the elongation apparatus. This chain is Methionyl-tRNA formyltransferase, found in Magnetococcus marinus (strain ATCC BAA-1437 / JCM 17883 / MC-1).